The following is a 264-amino-acid chain: ECF RNA polymerase sigma factor BldN (264 aa).

Residues 1–87 (MYPHVGVDAS…PAADSDSARM (87 aa)) are not required for transcription in vitro. The segment at 64-83 (RSSSSGAAATTHRRPAADSD) is disordered. The sigma-70 factor domain-2 stretch occupies residues 105–172 (LYDQYSDTVY…LVADHFKSSR (68 aa)). The short motif at 129 to 132 (DLTS) is the Polymerase core binding element. A sigma-70 factor domain-4 region spans residues 204-255 (ALLDAVRRLNPQQQECVTLRFLQGLSVAETARVMGKNEGAIKTLQYRAVRTL).

This sequence belongs to the sigma-70 factor family. ECF subfamily. Post-translationally, two forms of protein exist; a 35 kDa form in early growth and a 28 kDa form seen in later stages (at protein level). In liquid culture the larger form accumulates to higher level than on solid media. The shorter form results from processing just upstream of Met-87; the exact position is unknown. There are 4 possible start codons; mutation of the first prevents protein production while mutation of the other 3 (Val-44, Met-87 and Met-88) permits production of both forms. Introduction of stop codons between the first and second, or second and third possible start codons also prevents protein production, corroborating that the annotated start codon is the correct one.

In terms of biological role, sigma factors are initiation factors that promote the attachment of RNA polymerase to specific initiation sites and are then released. Extracytoplasmic function (ECF) sigma factors are usually held in an inactive form by an anti-sigma factor until released. ECF sigma factor involved in aerial mycelium formation, required for translation from the bldMp1 promoter. Expressed as a preprotein; processing and accumulation of the mature protein starts as aerial mycelium formation and sporulation commence. Activates expression of about 17 genes, including those for rdlA and most of the chaplins (chpA to chpH); chaplin activation is indirect. The polypeptide is ECF RNA polymerase sigma factor BldN (Streptomyces coelicolor (strain ATCC BAA-471 / A3(2) / M145)).